The chain runs to 160 residues: MFSFLILVFVASVADSVIGTAEVMSHVTAHFGKTLEECREESGLSVDILDEFKHFWSDDFDVVHRELGCAIICMSNKFSLMDDDVRMHHVNMDEYIKGFPNGQVLAEKMVKLIHNCEKQFDTETDDCTRVVKVAACFKKDSRKEGIAPEVAMIEAVIEKY.

Positions M1 to T20 are cleaved as a signal peptide. Intrachain disulfides connect C38/C73, C69/C127, and C116/C136.

The protein belongs to the PBP/GOBP family. As to quaternary structure, homodimer. In terms of tissue distribution, detected in antenna (at protein level). Expressed at high levels in antenna.

In terms of biological role, present in the aqueous fluid surrounding olfactory sensory dendrites and are thought to aid in the capture and transport of hydrophobic odorants into and through this fluid. This Bombyx mori (Silk moth) protein is General odorant-binding protein 2.